Consider the following 30-residue polypeptide: Cycloviolin-C (30 aa).

A cross-link (cyclopeptide (Gly-Asn)) is located at residues 1 to 30 (GIPCGESCVFIPCLTTVAGCSCKNKVCYRN). 3 disulfide bridges follow: cysteine 4–cysteine 20, cysteine 8–cysteine 22, and cysteine 13–cysteine 27.

In terms of processing, this is a cyclic peptide.

Functionally, probably participates in a plant defense mechanism. Has anti-HIV activity. The protein is Cycloviolin-C of Leonia cymosa (Sacha uba).